The following is a 790-amino-acid chain: IQ motif and ubiquitin-like domain-containing protein (790 aa).

A compositionally biased stretch (polar residues) spans 1–17; it reads MSNQPKKYETQNIANST. Residues 1-49 form a disordered region; that stretch reads MSNQPKKYETQNIANSTEESDAFDIVTIPVPSEEPQESDQTEEHESGIE. The Ubiquitin-like domain maps to 130 to 206; sequence ATVKVVLIPV…IQVEIFSTNP (77 aa). The IQ domain maps to 337–366; that stretch reads RLKAVIVIQTYYRQWHAKIFVEDLRRQKSL.

As to quaternary structure, component of the axonemal radial spoke 1 (RS1) complex, at least composed of spoke head proteins RSPH1, RSPH3, RSPH9 and the cilia-specific component RSPH4A or sperm-specific component RSPH6A, spoke stalk proteins RSPH14, DNAJB13, DYDC1, ROPN1L and NME5, and the anchor protein IQUB. Does not appear to be part of radial spoke complexes 2 or 3 (RS2 or RS3). Interacts with CALM1. Interacts with DNAJB13. Interacts with DYNLL2. Interacts with NME5. Interacts with RSPH3. Interacts with RSPH9. Interacts with ZMYND10. Interacts with calmodulin; the interaction occurs in conditions of low but not high calcium.

It localises to the cytoplasm. Its subcellular location is the cytoskeleton. It is found in the flagellum axoneme. The protein localises to the cell projection. The protein resides in the cilium. Functionally, adapter protein that anchors the radial spoke 1 (RS1) complex to the A microtubule of outer doublet microtubules in axonemes. The triple radial spokes (RS1, RS2 and RS3) are required to modulate beating of the sperm flagellum. May play a role in inhibiting signaling via MAPK1/ERK2 and MAPK3/ERK1. Additionally, may play a role in the functioning of cilia. Not required for the functioning of tracheal or ependymal cilia. The chain is IQ motif and ubiquitin-like domain-containing protein (IQUB) from Macaca fascicularis (Crab-eating macaque).